The chain runs to 2481 residues: Tetratricopeptide repeat protein 28 (2481 aa).

Met1 carries the N-acetylmethionine modification. The span at 1 to 14 (MEQSPPPAPEPTQG) shows a compositional bias: pro residues. A disordered region spans residues 1-48 (MEQSPPPAPEPTQGPTPARSRRRREPESPPASAPIPLFGADTIGQRSP). Phosphoserine is present on Ser28. 28 TPR repeats span residues 58–91 (FVEK…DPQN), 93–125 (ILYS…NPKW), 126–159 (PKAY…DPKS), 196–229 (FVVV…GTCS), 234–267 (GSVF…AKTL), 274–307 (CRAH…AMKL), 314–347 (SSAL…AKQS), 354–387 (AREL…AKDL), 394–427 (ARAY…AQEL), 434–467 (MRAY…AEDL), 474–507 (GRAS…AQEL), 514–547 (GRAY…SMEV), 554–587 (ASTH…AREL), 594–627 (ARAL…APDL), 634–667 (GKVC…AKDL), 674–707 (AKAY…AQSL), 714–747 (FRAL…AHQV), 754–787 (ASAY…YQEL), 794–827 (CRAH…GQKL), 834–867 (AQVY…LQQL), 877–910 (GRAY…AQSL), 917–950 (AKAY…AHEL), 957–990 (AQAY…ARDM), 997–1030 (SDAA…AEET), 1037–1070 (GRAY…AAQM), 1077–1110 (TVSY…AEQL), 1117–1150 (AKIR…FETI), and 1169–1202 (TSSY…AFAD). A Phosphoserine modification is found at Ser1590. 3 disordered regions span residues 2004–2055 (FVSK…DEEE), 2075–2161 (NTCF…DPQE), and 2176–2339 (AVER…PADA). 2 stretches are compositionally biased toward polar residues: residues 2029-2043 (AYLQ…QLPP) and 2096-2122 (SVSS…NSPF). Phosphoserine is present on Ser2104. Low complexity predominate over residues 2130–2146 (SSDTGESDQSSTETDST). The segment covering 2149-2159 (SQEESNPKLDP) has biased composition (basic and acidic residues). Residues 2183–2214 (SGGQVSKSNNPEDGVQAPSSTAVFRASETSAF) are compositionally biased toward polar residues. 2 positions are modified to phosphoserine: Ser2224 and Ser2251. Residues 2238 to 2282 (RSSSLPKVSSGYSSPTTSEMSIKDSPSQHSGRPSPGCDSQTSQLD) are compositionally biased toward polar residues. Low complexity predominate over residues 2307–2339 (SPSSGHQSPAGSAPSPALSYSSAGSARSSPADA). Phosphoserine occurs at positions 2393 and 2398. A disordered region spans residues 2420–2467 (QHDGAPPKAPPNGHWRTETTSLGSLPLPAGPPATAPARPLRLPSGNGY).

Interacts with AURKB. Widely expressed in fetal tissues. In adult tissues, expressed in testis and ovary and, at much lower levels, in kidney and pancreas.

It localises to the cytoplasm. Its subcellular location is the cytoskeleton. The protein localises to the microtubule organizing center. It is found in the centrosome. The protein resides in the spindle. It localises to the spindle pole. Its subcellular location is the midbody. Functionally, during mitosis, may be involved in the condensation of spindle midzone microtubules, leading to the formation of midbody. In Homo sapiens (Human), this protein is Tetratricopeptide repeat protein 28 (TTC28).